The primary structure comprises 293 residues: Histamine N-methyltransferase B (293 aa).

Glu-28 provides a ligand contact to substrate. The S-adenosyl-L-methionine site is built by Gly-60, Glu-89, Gln-94, Ser-120, and Ile-142. Asn-283 is a substrate binding site.

This sequence belongs to the class I-like SAM-binding methyltransferase superfamily. HNMT family. Monomer.

The protein localises to the cytoplasm. The catalysed reaction is histamine + S-adenosyl-L-methionine = N(tau)-methylhistamine + S-adenosyl-L-homocysteine + H(+). Its function is as follows. Inactivates histamine by N-methylation. Plays an important role in degrading histamine and in regulating the airway response to histamine. The chain is Histamine N-methyltransferase B (hnmt-b) from Xenopus laevis (African clawed frog).